We begin with the raw amino-acid sequence, 156 residues long: Small ribosomal subunit protein uS7 (156 aa).

Belongs to the universal ribosomal protein uS7 family. In terms of assembly, part of the 30S ribosomal subunit. Contacts proteins S9 and S11.

Functionally, one of the primary rRNA binding proteins, it binds directly to 16S rRNA where it nucleates assembly of the head domain of the 30S subunit. Is located at the subunit interface close to the decoding center, probably blocks exit of the E-site tRNA. This Shewanella denitrificans (strain OS217 / ATCC BAA-1090 / DSM 15013) protein is Small ribosomal subunit protein uS7.